A 219-amino-acid polypeptide reads, in one-letter code: Proteasome subunit beta type-9 (219 aa).

A propeptide spans 1 to 20 (MLQAGAPTAGSFRTGEVHTG) (removed in mature form). Threonine 21 functions as the Nucleophile in the catalytic mechanism. N6-acetyllysine occurs at positions 53 and 109.

The protein belongs to the peptidase T1B family. In terms of assembly, the 26S proteasome consists of a 20S proteasome core and two 19S regulatory subunits. The 20S proteasome core is composed of 28 subunits that are arranged in four stacked rings, resulting in a barrel-shaped structure. The two end rings are each formed by seven alpha subunits, and the two central rings are each formed by seven beta subunits. The catalytic chamber with the active sites is on the inside of the barrel. Component of the immunoproteasome, where it displaces the equivalent housekeeping subunit PSMB6. Component of the spermatoproteasome, a form of the proteasome specifically found in testis. Interacts with NCOA2 and NCOA3. Autocleaved. The resulting N-terminal Thr residue of the mature subunit is responsible for the nucleophile proteolytic activity. Detected in the cytoplasmic lobe of elongated spermatids, in residual bodies, and in the acrosomal cap of round spermatids.

The protein resides in the cytoplasm. Its subcellular location is the nucleus. The enzyme catalyses Cleavage of peptide bonds with very broad specificity.. Its function is as follows. The proteasome is a multicatalytic proteinase complex which is characterized by its ability to cleave peptides with Arg, Phe, Tyr, Leu, and Glu adjacent to the leaving group at neutral or slightly basic pH. The proteasome has an ATP-dependent proteolytic activity. This subunit is involved in antigen processing to generate class I binding peptides. The chain is Proteasome subunit beta type-9 (Psmb9) from Rattus norvegicus (Rat).